A 502-amino-acid chain; its full sequence is Cyclin-dependent kinase 19 (502 aa).

M1 bears the N-acetylmethionine mark. The region spanning E21–F335 is the Protein kinase domain. ATP is bound by residues V27–V35 and K52. The active-site Proton acceptor is D151. The segment at L359–Y502 is disordered. Residues N371–P392 show a composition bias toward low complexity. The span at T408–A421 shows a compositional bias: gly residues. Residues Q424–P435 show a composition bias toward polar residues. S449 carries the post-translational modification Phosphoserine. Residues Y458–Y467 show a composition bias toward polar residues. The span at Q468–S496 shows a compositional bias: low complexity.

The protein belongs to the protein kinase superfamily. CMGC Ser/Thr protein kinase family. CDC2/CDKX subfamily.

It localises to the cytoplasm. It is found in the perinuclear region. The protein localises to the nucleus. The enzyme catalyses L-seryl-[protein] + ATP = O-phospho-L-seryl-[protein] + ADP + H(+). It carries out the reaction L-threonyl-[protein] + ATP = O-phospho-L-threonyl-[protein] + ADP + H(+). The polypeptide is Cyclin-dependent kinase 19 (CDK19) (Homo sapiens (Human)).